The chain runs to 397 residues: Enoyl-[acyl-carrier-protein] reductase [NADH] (397 aa).

NAD(+)-binding positions include 48–53 (GASTGY), 74–75 (LE), 111–112 (DA), and 139–140 (LA). Residue tyrosine 225 participates in substrate binding. Tyrosine 235 serves as the catalytic Proton donor. Residues lysine 244 and 273-275 (VVT) contribute to the NAD(+) site.

The protein belongs to the TER reductase family. Monomer.

It carries out the reaction a 2,3-saturated acyl-[ACP] + NAD(+) = a (2E)-enoyl-[ACP] + NADH + H(+). The protein operates within lipid metabolism; fatty acid biosynthesis. In terms of biological role, involved in the final reduction of the elongation cycle of fatty acid synthesis (FAS II). Catalyzes the reduction of a carbon-carbon double bond in an enoyl moiety that is covalently linked to an acyl carrier protein (ACP). In Tolumonas auensis (strain DSM 9187 / NBRC 110442 / TA 4), this protein is Enoyl-[acyl-carrier-protein] reductase [NADH].